Reading from the N-terminus, the 337-residue chain is Protein LEG1 homolog (337 aa).

The signal sequence occupies residues 1-20 (MAVLASWVWVLAGCFCAAVA). A glycan (N-linked (GlcNAc...) asparagine) is linked at asparagine 171.

The protein belongs to the LEG1 family.

It is found in the secreted. Functionally, may be involved in early liver development. The protein is Protein LEG1 homolog of Mus musculus (Mouse).